A 208-amino-acid chain; its full sequence is MAKNYYDITLALAGICQSARLVQQLAHEGQCDNDALNTVLRGLLQTNPSSTLAVYGDTEQVLKMGLETLQSVLNANRQGEAAELTRYTLSLMVLERKLSASKSAMNTLGERISQLDRQLAHFDLESETMMSSLASIYVDVVSPLGPRIQVTGSPAILQSPLVQAKVRATLLAGIRSAVLWQQVGGSRLQLMFSRNRLFKQAQSILAHT.

It belongs to the HflD family.

It localises to the cytoplasm. The protein localises to the cell inner membrane. This Yersinia pestis bv. Antiqua (strain Nepal516) protein is High frequency lysogenization protein HflD homolog.